We begin with the raw amino-acid sequence, 364 residues long: tRNA 2-selenouridine synthase (364 aa).

One can recognise a Rhodanese domain in the interval 14 to 137 (LIADTPIIDV…LRQTAIQATI (124 aa)). The active-site S-selanylcysteine intermediate is the C97.

The protein belongs to the SelU family. Monomer.

It carries out the reaction 5-methylaminomethyl-2-thiouridine(34) in tRNA + selenophosphate + (2E)-geranyl diphosphate + H2O + H(+) = 5-methylaminomethyl-2-selenouridine(34) in tRNA + (2E)-thiogeraniol + phosphate + diphosphate. It catalyses the reaction 5-methylaminomethyl-2-thiouridine(34) in tRNA + (2E)-geranyl diphosphate = 5-methylaminomethyl-S-(2E)-geranyl-thiouridine(34) in tRNA + diphosphate. The catalysed reaction is 5-methylaminomethyl-S-(2E)-geranyl-thiouridine(34) in tRNA + selenophosphate + H(+) = 5-methylaminomethyl-2-(Se-phospho)selenouridine(34) in tRNA + (2E)-thiogeraniol. The enzyme catalyses 5-methylaminomethyl-2-(Se-phospho)selenouridine(34) in tRNA + H2O = 5-methylaminomethyl-2-selenouridine(34) in tRNA + phosphate. In terms of biological role, involved in the post-transcriptional modification of the uridine at the wobble position (U34) of tRNA(Lys), tRNA(Glu) and tRNA(Gln). Catalyzes the conversion of 2-thiouridine (S2U-RNA) to 2-selenouridine (Se2U-RNA). Acts in a two-step process involving geranylation of 2-thiouridine (S2U) to S-geranyl-2-thiouridine (geS2U) and subsequent selenation of the latter derivative to 2-selenouridine (Se2U) in the tRNA chain. This is tRNA 2-selenouridine synthase from Shigella flexneri.